Here is a 979-residue protein sequence, read N- to C-terminus: Translation initiation factor IF-2 (979 aa).

Positions 33–391 (VKSHSSTITT…TPPAEITLTE (359 aa)) are disordered. Composition is skewed to low complexity over residues 54–63 (QKRPQAPKAQ) and 139–150 (AKTTSPKAEPAA). Over residues 151 to 166 (PAAPKPKLMGPPPRPT) the composition is skewed to pro residues. A compositionally biased stretch (acidic residues) spans 234–252 (PELDEEPDTNNVEGDDDAT). Basic residues-rich tracts occupy residues 263 to 278 (PAAKPKKAIGPKPSKR) and 294 to 303 (TKTSKLKRRP). Over residues 314–328 (GTTTNNNAEVPSVSL) the composition is skewed to polar residues. The span at 371–380 (KEQRRDRPDV) shows a compositional bias: basic and acidic residues. The 174-residue stretch at 468-641 (HRPPVVTIMG…LLVSEIEELS (174 aa)) folds into the tr-type G domain. The tract at residues 477-484 (GHVDHGKT) is G1. A GTP-binding site is contributed by 477–484 (GHVDHGKT). The segment at 502–506 (GITQH) is G2. A G3 region spans residues 527–530 (DTPG). Residues 527–531 (DTPGH) and 581–584 (NKMD) contribute to the GTP site. Residues 581–584 (NKMD) form a G4 region. Residues 617–619 (SAL) form a G5 region.

It belongs to the TRAFAC class translation factor GTPase superfamily. Classic translation factor GTPase family. IF-2 subfamily.

The protein localises to the cytoplasm. Functionally, one of the essential components for the initiation of protein synthesis. Protects formylmethionyl-tRNA from spontaneous hydrolysis and promotes its binding to the 30S ribosomal subunits. Also involved in the hydrolysis of GTP during the formation of the 70S ribosomal complex. In Picosynechococcus sp. (strain ATCC 27264 / PCC 7002 / PR-6) (Agmenellum quadruplicatum), this protein is Translation initiation factor IF-2.